The sequence spans 248 residues: UPF0736 protein BcerKBAB4_1085 (248 aa).

This sequence belongs to the UPF0736 family.

This is UPF0736 protein BcerKBAB4_1085 from Bacillus mycoides (strain KBAB4) (Bacillus weihenstephanensis).